The sequence spans 513 residues: ATP synthase subunit alpha (513 aa).

169-176 provides a ligand contact to ATP; sequence GDRQTGKT.

It belongs to the ATPase alpha/beta chains family. As to quaternary structure, F-type ATPases have 2 components, CF(1) - the catalytic core - and CF(0) - the membrane proton channel. CF(1) has five subunits: alpha(3), beta(3), gamma(1), delta(1), epsilon(1). CF(0) has three main subunits: a(1), b(2) and c(9-12). The alpha and beta chains form an alternating ring which encloses part of the gamma chain. CF(1) is attached to CF(0) by a central stalk formed by the gamma and epsilon chains, while a peripheral stalk is formed by the delta and b chains.

Its subcellular location is the cell inner membrane. The enzyme catalyses ATP + H2O + 4 H(+)(in) = ADP + phosphate + 5 H(+)(out). Its function is as follows. Produces ATP from ADP in the presence of a proton gradient across the membrane. The alpha chain is a regulatory subunit. This Thiobacillus denitrificans (strain ATCC 25259 / T1) protein is ATP synthase subunit alpha.